The primary structure comprises 23 residues: Dermaseptin-4 (23 aa).

A Glutamine amide modification is found at Gln23.

As to expression, expressed by the skin glands.

The protein localises to the secreted. Antimicrobial peptide, active against the Gram-positive bacterium S.aureus, and the Gram-negative bacteria E.coli and P.aeruginosa. Has hemolytic activity (5% hemolysis at 128 ug/ml). The polypeptide is Dermaseptin-4 (Phyllomedusa tarsius (Brownbelly leaf frog)).